Here is a 388-residue protein sequence, read N- to C-terminus: Mannitol-1-phosphate 5-dehydrogenase (388 aa).

5 to 16 is an NAD(+) binding site; sequence AVHFGGGNIGRG. Lys213 is an active-site residue.

This sequence belongs to the mannitol dehydrogenase family. Monomer.

The enzyme catalyses D-mannitol 1-phosphate + NAD(+) = beta-D-fructose 6-phosphate + NADH + H(+). Its function is as follows. Catalyzes the NAD(H)-dependent interconversion of D-fructose 6-phosphate and D-mannitol 1-phosphate in the mannitol metabolic pathway. The polypeptide is Mannitol-1-phosphate 5-dehydrogenase (Ajellomyces capsulatus (strain NAm1 / WU24) (Darling's disease fungus)).